The primary structure comprises 279 residues: Large ribosomal subunit protein uL2 (279 aa).

The disordered stretch occupies residues glycine 222–arginine 279. Residues isoleucine 269–arginine 279 are compositionally biased toward basic residues.

It belongs to the universal ribosomal protein uL2 family. In terms of assembly, part of the 50S ribosomal subunit. Forms a bridge to the 30S subunit in the 70S ribosome.

Its function is as follows. One of the primary rRNA binding proteins. Required for association of the 30S and 50S subunits to form the 70S ribosome, for tRNA binding and peptide bond formation. It has been suggested to have peptidyltransferase activity; this is somewhat controversial. Makes several contacts with the 16S rRNA in the 70S ribosome. The protein is Large ribosomal subunit protein uL2 of Caulobacter vibrioides (strain ATCC 19089 / CIP 103742 / CB 15) (Caulobacter crescentus).